Reading from the N-terminus, the 93-residue chain is U11-ctenitoxin-Pn1a (93 aa).

A signal peptide spans 1-21 (MKCAVLFLSVIALVHIFVVEA). Positions 22–34 (EEEPDSDALVPQE) are excised as a propeptide. 5 cysteine pairs are disulfide-bonded: C37-C51, C44-C57, C50-C75, C59-C73, and C83-C90.

It belongs to the neurotoxin 09 (Tx3-6) family. In terms of tissue distribution, expressed by the venom gland.

Its subcellular location is the secreted. Its function is as follows. Probable neurotoxin. This is U11-ctenitoxin-Pn1a from Phoneutria nigriventer (Brazilian armed spider).